The sequence spans 121 residues: Small ribosomal subunit protein uS12 (121 aa).

Positions 1–25 (MPTINQLVRKNRKQKKSQSKSPVLE) are disordered. The segment covering 9–18 (RKNRKQKKSQ) has biased composition (basic residues). Position 89 is a 3-methylthioaspartic acid (aspartate 89).

Belongs to the universal ribosomal protein uS12 family. In terms of assembly, part of the 30S ribosomal subunit. Contacts proteins S8 and S17. May interact with IF1 in the 30S initiation complex.

In terms of biological role, with S4 and S5 plays an important role in translational accuracy. Its function is as follows. Interacts with and stabilizes bases of the 16S rRNA that are involved in tRNA selection in the A site and with the mRNA backbone. Located at the interface of the 30S and 50S subunits, it traverses the body of the 30S subunit contacting proteins on the other side and probably holding the rRNA structure together. The combined cluster of proteins S8, S12 and S17 appears to hold together the shoulder and platform of the 30S subunit. The polypeptide is Small ribosomal subunit protein uS12 (Rhodopirellula baltica (strain DSM 10527 / NCIMB 13988 / SH1)).